The primary structure comprises 181 residues: Squamosa promoter-binding-like protein 5 (181 aa).

A compositionally biased stretch (basic residues) spans 1–10; sequence MEGQRTQRRG. The interval 1–58 is disordered; it reads MEGQRTQRRGYLKDKATVSNLVEEEMENGMDGEEEDGGDEDKRKKVMERVRGPSTDRV. Residues 22 to 39 show a composition bias toward acidic residues; it reads VEEEMENGMDGEEEDGGD. The segment covering 40-51 has biased composition (basic and acidic residues); the sequence is EDKRKKVMERVR. The SBP-type zinc-finger motif lies at 60-137; that stretch reads SRLCQVDRCT…AGHNERRRKI (78 aa). Residues Cys63, Cys68, Cys85, His88, Cys104, Cys107, His111, and Cys123 each contribute to the Zn(2+) site. The short motif at 120 to 136 is the Bipartite nuclear localization signal element; it reads KRSCRRRLAGHNERRRK. Residues 128–181 are disordered; the sequence is AGHNERRRKISGDSFGEGSGRRGFSGQLIQTQERNRVDRKLPMTNSSFKRPQIR. Residues 170-181 show a composition bias toward polar residues; it reads MTNSSFKRPQIR.

The cofactor is Zn(2+). Expressed in the inflorescence apical meristem and young flowers.

The protein resides in the nucleus. Its subcellular location is the cytoplasm. Its function is as follows. Trans-acting factor that binds specifically to the consensus nucleotide sequence 5'-TNCGTACAA-3' of AP1 promoter. Promotes both vegetative phase change and flowering. This Arabidopsis thaliana (Mouse-ear cress) protein is Squamosa promoter-binding-like protein 5 (SPL5).